Consider the following 540-residue polypeptide: MLFCNDSNKELREQKVSLSHEFATDNHRVEKLSLKFENIYFDYSKNLVNDNILKTLLESASKSNLKNKIQQMFAGEKINSTENRSVLHTALRDLSNSPLVIDGQDIRKEVNEEKQRVKALVEKVTSGDWKGFSGKRITDIVNIGIGGSDLGPKMVVRALQPYHCTGLKVHFVSNVDADSLLQALHVIDPETTLFIVASKSFSTEETLLNSISAREWLLDHYEDEKAVANHFVAISSKLDKVEEFGINLEHCYKMWDWVGGRYSLWSSIGMSIAFAVGYDNFEKLLAGAYSIDKHFKETEFDKNIPVIMGLLASYYSCAYQSQSQALLPYDERLCYFVDYLQQADMESNGKSVNLAGEGVDYQTGVVLWGGVGTNGQHAFHQLLHQGNVFIPVDFIAVATSHHNYDNHQQALLANCFAQSQALMFGQSYDMVYNELLNSGLSEVQAKQLAPHKVIPGNRPSTTILLDELSPYTLGALIALYEHKIFVQGVLWDINSYDQWGVELGKKLGKNILKAMSDDSSAEYQNLDESTKWLIAKVKSK.

Glu-346 serves as the catalytic Proton donor. Residues His-377 and Lys-505 contribute to the active site.

Belongs to the GPI family.

It localises to the cytoplasm. The enzyme catalyses alpha-D-glucose 6-phosphate = beta-D-fructose 6-phosphate. Its pathway is carbohydrate biosynthesis; gluconeogenesis. It participates in carbohydrate degradation; glycolysis; D-glyceraldehyde 3-phosphate and glycerone phosphate from D-glucose: step 2/4. Catalyzes the reversible isomerization of glucose-6-phosphate to fructose-6-phosphate. This Francisella philomiragia subsp. philomiragia (strain ATCC 25017 / CCUG 19701 / FSC 153 / O#319-036) protein is Glucose-6-phosphate isomerase.